Reading from the N-terminus, the 517-residue chain is MSEQVALNPSEISELIRKKIDQFSVVSEARNEGTIVSLKDGIVRLHGLADVMAGEMIEFPGGVYGLALNLKRDSVGAVILGDSSTLAEGQKGKCTGRILEVPVGKGLLGRVVDALGNPIDGKGPIESSGMSPIEKVAPGVVTRKSIDQPVQTGLKAIDAMIPVGRGQRELIIGDRQTGKTAIAIDAIINQKGTGVKCVYVAIGQKASSVASIVRKLEEHGALEHTIVVVAGASDSAALQYIAPYAGCTMGEYFMERGEDALIVYDDLTKQAWAYRQISLLLRRPPGREAYPGDIFYLHSRLLERAARINADEVEKLTNGEVKGKTGSLTALPIIETQAGDVSAFVPTNVISITDGQIFLDVDLFNSGVRPAINSGLSVSRVGGAAQTKIMKKLGGGTRLALAQFRELEAFSQFASDLDDATRKQLERGQRITELMKQKQYSPLTVAEMGVSLFVVEKGYLDDVPVNEISSFEASLHDYMRSTHAALLHAINEAGAYDNEIEAKLKKAVEEFKNTGSW.

173–180 (GDRQTGKT) contributes to the ATP binding site.

This sequence belongs to the ATPase alpha/beta chains family. In terms of assembly, F-type ATPases have 2 components, CF(1) - the catalytic core - and CF(0) - the membrane proton channel. CF(1) has five subunits: alpha(3), beta(3), gamma(1), delta(1), epsilon(1). CF(0) has three main subunits: a(1), b(2) and c(9-12). The alpha and beta chains form an alternating ring which encloses part of the gamma chain. CF(1) is attached to CF(0) by a central stalk formed by the gamma and epsilon chains, while a peripheral stalk is formed by the delta and b chains.

Its subcellular location is the cell inner membrane. It catalyses the reaction ATP + H2O + 4 H(+)(in) = ADP + phosphate + 5 H(+)(out). Functionally, produces ATP from ADP in the presence of a proton gradient across the membrane. The alpha chain is a regulatory subunit. The polypeptide is ATP synthase subunit alpha 2 (Legionella pneumophila (strain Corby)).